We begin with the raw amino-acid sequence, 316 residues long: UDP-3-O-acylglucosamine N-acyltransferase 2 (316 aa).

Histidine 230 serves as the catalytic Proton acceptor.

Belongs to the transferase hexapeptide repeat family. LpxD subfamily. Homotrimer.

The catalysed reaction is a UDP-3-O-[(3R)-3-hydroxyacyl]-alpha-D-glucosamine + a (3R)-hydroxyacyl-[ACP] = a UDP-2-N,3-O-bis[(3R)-3-hydroxyacyl]-alpha-D-glucosamine + holo-[ACP] + H(+). It participates in bacterial outer membrane biogenesis; LPS lipid A biosynthesis. Functionally, catalyzes the N-acylation of UDP-3-O-acylglucosamine using 3-hydroxyacyl-ACP as the acyl donor. Is involved in the biosynthesis of lipid A, a phosphorylated glycolipid that anchors the lipopolysaccharide to the outer membrane of the cell. This is UDP-3-O-acylglucosamine N-acyltransferase 2 from Sulfurimonas denitrificans (strain ATCC 33889 / DSM 1251) (Thiomicrospira denitrificans (strain ATCC 33889 / DSM 1251)).